The sequence spans 201 residues: NADH-quinone oxidoreductase subunit B 1 (201 aa).

Positions 80, 81, 145, and 175 each coordinate [4Fe-4S] cluster.

It belongs to the complex I 20 kDa subunit family. In terms of assembly, NDH-1 is composed of 14 different subunits. Subunits NuoB, C, D, E, F, and G constitute the peripheral sector of the complex. It depends on [4Fe-4S] cluster as a cofactor.

The protein localises to the cell inner membrane. It catalyses the reaction a quinone + NADH + 5 H(+)(in) = a quinol + NAD(+) + 4 H(+)(out). Its function is as follows. NDH-1 shuttles electrons from NADH, via FMN and iron-sulfur (Fe-S) centers, to quinones in the respiratory chain. The immediate electron acceptor for the enzyme in this species is believed to be ubiquinone. Couples the redox reaction to proton translocation (for every two electrons transferred, four hydrogen ions are translocated across the cytoplasmic membrane), and thus conserves the redox energy in a proton gradient. The chain is NADH-quinone oxidoreductase subunit B 1 from Rhodopseudomonas palustris (strain BisB18).